Consider the following 140-residue polypeptide: Large ribosomal subunit protein bL17 (140 aa).

Basic and acidic residues predominate over residues 119–133; that stretch reads DPSAKGAADRARLEE. Residues 119-140 are disordered; it reads DPSAKGAADRARLEEEGGMTEE.

It belongs to the bacterial ribosomal protein bL17 family. In terms of assembly, part of the 50S ribosomal subunit. Contacts protein L32.

In Maricaulis maris (strain MCS10) (Caulobacter maris), this protein is Large ribosomal subunit protein bL17.